A 159-amino-acid polypeptide reads, in one-letter code: 6,7-dimethyl-8-ribityllumazine synthase (159 aa).

5-amino-6-(D-ribitylamino)uracil contacts are provided by residues Trp30, 64–66 (TFE), and 88–90 (CVI). 93 to 94 (ET) contacts (2S)-2-hydroxy-3-oxobutyl phosphate. Catalysis depends on His96, which acts as the Proton donor. Residue Phe121 coordinates 5-amino-6-(D-ribitylamino)uracil. Arg135 is a (2S)-2-hydroxy-3-oxobutyl phosphate binding site.

It belongs to the DMRL synthase family.

It catalyses the reaction (2S)-2-hydroxy-3-oxobutyl phosphate + 5-amino-6-(D-ribitylamino)uracil = 6,7-dimethyl-8-(1-D-ribityl)lumazine + phosphate + 2 H2O + H(+). The protein operates within cofactor biosynthesis; riboflavin biosynthesis; riboflavin from 2-hydroxy-3-oxobutyl phosphate and 5-amino-6-(D-ribitylamino)uracil: step 1/2. In terms of biological role, catalyzes the formation of 6,7-dimethyl-8-ribityllumazine by condensation of 5-amino-6-(D-ribitylamino)uracil with 3,4-dihydroxy-2-butanone 4-phosphate. This is the penultimate step in the biosynthesis of riboflavin. The sequence is that of 6,7-dimethyl-8-ribityllumazine synthase from Cytophaga hutchinsonii (strain ATCC 33406 / DSM 1761 / CIP 103989 / NBRC 15051 / NCIMB 9469 / D465).